The following is a 241-amino-acid chain: Anthocyanidin 3-O-glucosyltransferase 4 (241 aa).

UDP-alpha-D-glucose is bound by residues Gln104, His119, Trp122, Asn123, Ser124, and Glu127. An an anthocyanidin-binding site is contributed by Ala142. UDP-alpha-D-glucose contacts are provided by Glu143 and Gln144.

The protein belongs to the UDP-glycosyltransferase family. As to expression, faintly expressed in cotyledons, roots and leaves.

The catalysed reaction is an anthocyanidin + UDP-alpha-D-glucose + H(+) = an anthocyanidin 3-O-beta-D-glucoside + UDP. It functions in the pathway pigment biosynthesis; anthocyanin biosynthesis. In terms of biological role, in the presence of other necessary color factors, this glycosylation reaction allows the accumulation of anthocyanin pigments. This Manihot esculenta (Cassava) protein is Anthocyanidin 3-O-glucosyltransferase 4 (GT4).